We begin with the raw amino-acid sequence, 1799 residues long: Bromodomain and WD repeat-containing protein 3 (1799 aa).

8 WD repeats span residues Ile-170–Thr-209, Arg-213–Leu-251, Ala-255–Trp-297, Arg-307–Leu-347, Glu-353–Tyr-393, Ser-400–Ser-452, Gln-456–Leu-495, and Arg-502–Phe-542. Position 693 is a phosphoserine (Ser-693). Positions Lys-766–Met-912 are disordered. A compositionally biased stretch (basic residues) spans Ser-784 to His-794. Residues Thr-795 to Gln-816 are compositionally biased toward polar residues. The segment covering Glu-817 to Thr-828 has biased composition (acidic residues). Residues Ser-845–Asp-858 are compositionally biased toward low complexity. The segment covering Arg-875–Ser-884 has biased composition (polar residues). Ser-884 and Ser-885 each carry phosphoserine. Over residues Lys-897–Gly-907 the composition is skewed to basic residues. Positions Trp-1136 to Gln-1243 constitute a Bromo 1 domain. Disordered stretches follow at residues Glu-1258–Gly-1291, Glu-1321–Pro-1366, Ile-1435–Ser-1482, and Ser-1517–Ala-1723. Residues Pro-1260–Ser-1276 are compositionally biased toward acidic residues. In terms of domain architecture, Bromo 2 spans Cys-1298 to Ile-1427. The segment covering Pro-1333–Pro-1348 has biased composition (low complexity). The segment covering Gln-1438–Arg-1450 has biased composition (basic residues). Composition is skewed to low complexity over residues Ser-1451–Ser-1463 and Ser-1517–Ser-1530. 2 positions are modified to phosphoserine: Ser-1574 and Ser-1576. Over residues Gly-1584–Val-1596 the composition is skewed to basic and acidic residues. A compositionally biased stretch (low complexity) spans Leu-1598 to Glu-1623. The segment covering Ser-1624 to Ser-1640 has biased composition (basic and acidic residues). Composition is skewed to basic residues over residues Arg-1646–Lys-1663 and Arg-1681–Arg-1694. Ser-1760 is subject to Phosphoserine.

Functionally, plays a role in the regulation of cell morphology and cytoskeletal organization. Required in the control of cell shape. The polypeptide is Bromodomain and WD repeat-containing protein 3 (Brwd3) (Mus musculus (Mouse)).